We begin with the raw amino-acid sequence, 380 residues long: O-phospho-L-seryl-tRNA:Cys-tRNA synthase (380 aa).

Residues 86–87, N192, and 215–217 contribute to the pyridoxal 5'-phosphate site; these read AR and SGH. Position 218 is an N6-(pyridoxal phosphate)lysine (K218).

Belongs to the SepCysS family. Homodimer. Interacts with SepRS. Pyridoxal 5'-phosphate serves as cofactor.

The catalysed reaction is O-phospho-L-seryl-tRNA(Cys) + hydrogen sulfide + H(+) = L-cysteinyl-tRNA(Cys) + phosphate. In terms of biological role, converts O-phospho-L-seryl-tRNA(Cys) (Sep-tRNA(Cys)) to L-cysteinyl-tRNA(Cys) (Cys-tRNA(Cys)). This is O-phospho-L-seryl-tRNA:Cys-tRNA synthase from Methanococcus maripaludis (strain C5 / ATCC BAA-1333).